A 168-amino-acid chain; its full sequence is Lipoprotein signal peptidase (168 aa).

Transmembrane regions (helical) follow at residues 5–25 (SPYALLVVAAIALDQWIKHLV), 37–57 (LVPFLALFRTYNTGIAFSMFS), 59–79 (FGDTGLVVIAVLVVAFVLYLA), and 85–105 (GHVIARTGFALIIGGALGNLI). Active-site residues include aspartate 115 and aspartate 133. A helical membrane pass occupies residues 125–145 (SFAIFNLADAFISVGAALVVF).

This sequence belongs to the peptidase A8 family.

The protein resides in the cell inner membrane. The catalysed reaction is Release of signal peptides from bacterial membrane prolipoproteins. Hydrolyzes -Xaa-Yaa-Zaa-|-(S,diacylglyceryl)Cys-, in which Xaa is hydrophobic (preferably Leu), and Yaa (Ala or Ser) and Zaa (Gly or Ala) have small, neutral side chains.. The protein operates within protein modification; lipoprotein biosynthesis (signal peptide cleavage). Its function is as follows. This protein specifically catalyzes the removal of signal peptides from prolipoproteins. This is Lipoprotein signal peptidase from Mesorhizobium japonicum (strain LMG 29417 / CECT 9101 / MAFF 303099) (Mesorhizobium loti (strain MAFF 303099)).